Consider the following 141-residue polypeptide: Hemoglobin subunit alpha (141 aa).

Residues 2–141 (AFTACEKQTI…ICQELSSRYR (140 aa)) enclose the Globin domain. An O2-binding site is contributed by His-59. Heme b is bound at residue His-88.

This sequence belongs to the globin family. In terms of assembly, heterotetramer of two alpha chains and two beta chains. Red blood cells.

Involved in oxygen transport from gills to the various peripheral tissues. This chain is Hemoglobin subunit alpha (HBA), found in Mustelus griseus (Spotless smooth-hound).